The following is a 253-amino-acid chain: 3-deoxy-manno-octulosonate cytidylyltransferase (253 aa).

It belongs to the KdsB family.

The protein resides in the cytoplasm. The enzyme catalyses 3-deoxy-alpha-D-manno-oct-2-ulosonate + CTP = CMP-3-deoxy-beta-D-manno-octulosonate + diphosphate. It functions in the pathway nucleotide-sugar biosynthesis; CMP-3-deoxy-D-manno-octulosonate biosynthesis; CMP-3-deoxy-D-manno-octulosonate from 3-deoxy-D-manno-octulosonate and CTP: step 1/1. The protein operates within bacterial outer membrane biogenesis; lipopolysaccharide biosynthesis. Its function is as follows. Activates KDO (a required 8-carbon sugar) for incorporation into bacterial lipopolysaccharide in Gram-negative bacteria. In Acinetobacter baumannii (strain AYE), this protein is 3-deoxy-manno-octulosonate cytidylyltransferase.